Consider the following 703-residue polypeptide: Polyribonucleotide nucleotidyltransferase (703 aa).

The Mg(2+) site is built by Asp486 and Asp492. The region spanning 553 to 614 (PRITTIWIKP…AACDAAIQMI (62 aa)) is the KH domain. In terms of domain architecture, S1 motif spans 624–692 (GKLYMGTVKK…KQGKIKLSRK (69 aa)).

Belongs to the polyribonucleotide nucleotidyltransferase family. Mg(2+) serves as cofactor.

Its subcellular location is the cytoplasm. The catalysed reaction is RNA(n+1) + phosphate = RNA(n) + a ribonucleoside 5'-diphosphate. Functionally, involved in mRNA degradation. Catalyzes the phosphorolysis of single-stranded polyribonucleotides processively in the 3'- to 5'-direction. This Trichlorobacter lovleyi (strain ATCC BAA-1151 / DSM 17278 / SZ) (Geobacter lovleyi) protein is Polyribonucleotide nucleotidyltransferase.